We begin with the raw amino-acid sequence, 221 residues long: GTP-binding nuclear protein Ran2 (221 aa).

The Small GTPase Ran-type domain maps to Asp-10–Asp-174. Asp-21–Thr-28 contributes to the GTP binding site. The segment at Lys-40–Val-48 is switch-I. Residues Gly-71, Asn-125–Asp-128, and Ser-153–Lys-155 each bind GTP. The interval Gly-71–Gln-87 is switch-II.

It belongs to the small GTPase superfamily. Ran family. In terms of assembly, found in a nuclear export complex with RanGTP, exportin and pre-miRNA.

It localises to the nucleus. Its function is as follows. GTP-binding protein involved in nucleocytoplasmic transport. Required for the import of protein into the nucleus and also for RNA export. Involved in chromatin condensation and control of cell cycle. This Solanum lycopersicum (Tomato) protein is GTP-binding nuclear protein Ran2 (RAN2).